The chain runs to 786 residues: Endonuclease MutS2 (786 aa).

333–340 (GPNTGGKT) is an ATP binding site. Positions 711-786 (LDLRGERYDQ…GSGATIVNFK (76 aa)) constitute a Smr domain.

It belongs to the DNA mismatch repair MutS family. MutS2 subfamily. In terms of assembly, homodimer. Binds to stalled ribosomes, contacting rRNA.

Endonuclease that is involved in the suppression of homologous recombination and thus may have a key role in the control of bacterial genetic diversity. Its function is as follows. Acts as a ribosome collision sensor, splitting the ribosome into its 2 subunits. Detects stalled/collided 70S ribosomes which it binds and splits by an ATP-hydrolysis driven conformational change. Acts upstream of the ribosome quality control system (RQC), a ribosome-associated complex that mediates the extraction of incompletely synthesized nascent chains from stalled ribosomes and their subsequent degradation. Probably generates substrates for RQC. This chain is Endonuclease MutS2, found in Lacticaseibacillus paracasei (strain ATCC 334 / BCRC 17002 / CCUG 31169 / CIP 107868 / KCTC 3260 / NRRL B-441) (Lactobacillus paracasei).